We begin with the raw amino-acid sequence, 889 residues long: DNA gyrase subunit A (889 aa).

The Topo IIA-type catalytic domain occupies 35-501 (LPDVRDGLKP…GFEDLEDEDL (467 aa)). Residue tyrosine 123 is the O-(5'-phospho-DNA)-tyrosine intermediate of the active site. A GyrA-box motif is present at residues 528-534 (QNRGGRG). Residues 810–889 (VKEDAEDETN…IQQSSDEDEE (80 aa)) are disordered. Residues 813 to 823 (DAEDETNEDEQ) are compositionally biased toward acidic residues. Over residues 863-875 (DGRIEVRQDFMDR) the composition is skewed to basic and acidic residues. Residues 876–889 (VEEDIQQSSDEDEE) are compositionally biased toward acidic residues.

The protein belongs to the type II topoisomerase GyrA/ParC subunit family. Heterotetramer, composed of two GyrA and two GyrB chains. In the heterotetramer, GyrA contains the active site tyrosine that forms a transient covalent intermediate with DNA, while GyrB binds cofactors and catalyzes ATP hydrolysis.

It localises to the cytoplasm. The catalysed reaction is ATP-dependent breakage, passage and rejoining of double-stranded DNA.. A type II topoisomerase that negatively supercoils closed circular double-stranded (ds) DNA in an ATP-dependent manner to modulate DNA topology and maintain chromosomes in an underwound state. Negative supercoiling favors strand separation, and DNA replication, transcription, recombination and repair, all of which involve strand separation. Also able to catalyze the interconversion of other topological isomers of dsDNA rings, including catenanes and knotted rings. Type II topoisomerases break and join 2 DNA strands simultaneously in an ATP-dependent manner. This Staphylococcus aureus (strain N315) protein is DNA gyrase subunit A.